A 605-amino-acid polypeptide reads, in one-letter code: E3 ubiquitin-protein ligase synoviolin A (605 aa).

Residues 1-19 (MTGASLALTAAVVAHAYYL) form a helical membrane-spanning segment. Over 20-35 (KNQFYPTVVYLTKSSP) the chain is Lumenal. The chain crosses the membrane as a helical span at residues 36–56 (SMAVLYIQAFVLVFLLGKFMG). Over 57–92 (KVFFGQLRAAEMEHLLERSWYAVTETCLAFTVFRDD) the chain is Cytoplasmic. The chain crosses the membrane as a helical span at residues 93 to 113 (FSPRFVALFTLLLFLKCFHWL). Residues 114–129 (AEDRVDFMERSPNISW) are Lumenal-facing. The chain crosses the membrane as a helical span at residues 130 to 150 (LFHFRILALMLLLGVLDAFFV). Residues 151–163 (SHAYHSLVIRGAS) are Cytoplasmic-facing. The helical transmembrane segment at 164-184 (VQLVFGFEYAILMTVILTVFI) threads the bilayer. The Lumenal portion of the chain corresponds to 185–218 (KYILHSVDLQSENPWDNKAVYMLYTELFTGFIKV). The helical transmembrane segment at 219 to 239 (LLYVAFMTIMVKVHTFPLFAI) threads the bilayer. The interaction with p53/TP53 stretch occupies residues 230 to 264 (KVHTFPLFAIRPMYLAMRQFKKAVTDAIMSRRAIR). The Cytoplasmic segment spans residues 240–605 (RPMYLAMRQF…KLETGTTDSQ (366 aa)). Positions 285, 288, 301, 303, 306, 309, 320, and 323 each coordinate Zn(2+). An RING-type; atypical zinc finger spans residues 285-324 (CIICREEMVTGAKRLPCNHIFHTSCLRSWFQRQQTCPTCR). The segment covering 334–355 (TQPQTPTEQQNQHQNQAQQQPT) has biased composition (low complexity). A disordered region spans residues 334–433 (TQPQTPTEQQ…QPGAALPGFP (100 aa)). The segment covering 356 to 391 (PVIPPQPNFPPGILPPFPPGMFPLWPPMGPFPPVPG) has biased composition (pro residues). Low complexity predominate over residues 403–414 (PGSSSGSSPRPG). Residues 415–424 (ETSNVGSESQ) show a composition bias toward polar residues. The stretch at 465-496 (EELRAMEGHERQNLEARLQCLQNIHTLLDAAM) forms a coiled coil. A disordered region spans residues 513–605 (QPPISSTSTS…KLETGTTDSQ (93 aa)). Positions 516–539 (ISSTSTSTSSAASASTAPTTSNIS) are enriched in low complexity. The segment covering 546–555 (DTTSTVTNTE) has biased composition (polar residues). The span at 556–579 (SSQQSAPPAPVSVETLSGAEGGET) shows a compositional bias: low complexity.

This sequence belongs to the HRD1 family. Homodimer.

It is found in the endoplasmic reticulum membrane. It catalyses the reaction S-ubiquitinyl-[E2 ubiquitin-conjugating enzyme]-L-cysteine + [acceptor protein]-L-lysine = [E2 ubiquitin-conjugating enzyme]-L-cysteine + N(6)-ubiquitinyl-[acceptor protein]-L-lysine.. It participates in protein modification; protein ubiquitination. In terms of biological role, E3 ubiquitin-protein ligase which accepts ubiquitin specifically from endoplasmic reticulum-associated UBC7 E2 ligase and transfers it to substrates, promoting their degradation. Component of the endoplasmic reticulum quality control (ERQC) system also called ER-associated degradation (ERAD) involved in ubiquitin-dependent degradation of misfolded endoplasmic reticulum proteins. Also promotes the degradation of normal but naturally short-lived proteins. Protects cells from ER stress-induced apoptosis. Sequesters p53 in the cytoplasm and promotes its degradation, thereby negatively regulating its biological function in transcription, cell cycle regulation and apoptosis. This Xenopus laevis (African clawed frog) protein is E3 ubiquitin-protein ligase synoviolin A (syvn1-a).